A 408-amino-acid chain; its full sequence is Tyrosine--tRNA ligase (408 aa).

The 'HIGH' region motif lies at 50-59 (PTGKDLTLGH). The 'KMSKS' region signature appears at 234–238 (KMSKS). Residue lysine 237 participates in ATP binding. Residues 346 to 407 (MQAARVLFTA…GKRKYGRVVL (62 aa)) form the S4 RNA-binding domain.

The protein belongs to the class-I aminoacyl-tRNA synthetase family. TyrS type 2 subfamily. In terms of assembly, homodimer.

It is found in the cytoplasm. It carries out the reaction tRNA(Tyr) + L-tyrosine + ATP = L-tyrosyl-tRNA(Tyr) + AMP + diphosphate + H(+). In terms of biological role, catalyzes the attachment of tyrosine to tRNA(Tyr) in a two-step reaction: tyrosine is first activated by ATP to form Tyr-AMP and then transferred to the acceptor end of tRNA(Tyr). In Symbiobacterium thermophilum (strain DSM 24528 / JCM 14929 / IAM 14863 / T), this protein is Tyrosine--tRNA ligase.